The following is a 101-amino-acid chain: Small ribosomal subunit protein uS14 (101 aa).

It belongs to the universal ribosomal protein uS14 family. In terms of assembly, part of the 30S ribosomal subunit. Contacts proteins S3 and S10.

Functionally, binds 16S rRNA, required for the assembly of 30S particles and may also be responsible for determining the conformation of the 16S rRNA at the A site. The chain is Small ribosomal subunit protein uS14 from Pseudomonas putida (strain GB-1).